We begin with the raw amino-acid sequence, 164 residues long: ATP synthase subunit b 2 (164 aa).

The chain crosses the membrane as a helical span at residues T4–P24.

Belongs to the ATPase B chain family. F-type ATPases have 2 components, F(1) - the catalytic core - and F(0) - the membrane proton channel. F(1) has five subunits: alpha(3), beta(3), gamma(1), delta(1), epsilon(1). F(0) has three main subunits: a(1), b(2) and c(10-14). The alpha and beta chains form an alternating ring which encloses part of the gamma chain. F(1) is attached to F(0) by a central stalk formed by the gamma and epsilon chains, while a peripheral stalk is formed by the delta and b chains.

It localises to the cell inner membrane. In terms of biological role, f(1)F(0) ATP synthase produces ATP from ADP in the presence of a proton or sodium gradient. F-type ATPases consist of two structural domains, F(1) containing the extramembraneous catalytic core and F(0) containing the membrane proton channel, linked together by a central stalk and a peripheral stalk. During catalysis, ATP synthesis in the catalytic domain of F(1) is coupled via a rotary mechanism of the central stalk subunits to proton translocation. Functionally, component of the F(0) channel, it forms part of the peripheral stalk, linking F(1) to F(0). The polypeptide is ATP synthase subunit b 2 (Bartonella quintana (strain Toulouse) (Rochalimaea quintana)).